The sequence spans 61 residues: Small ribosomal subunit protein uS14 (61 aa).

The Zn(2+) site is built by cysteine 24, cysteine 27, cysteine 40, and cysteine 43.

It belongs to the universal ribosomal protein uS14 family. Zinc-binding uS14 subfamily. In terms of assembly, part of the 30S ribosomal subunit. Contacts proteins S3 and S10. The cofactor is Zn(2+).

Its function is as follows. Binds 16S rRNA, required for the assembly of 30S particles and may also be responsible for determining the conformation of the 16S rRNA at the A site. The protein is Small ribosomal subunit protein uS14 of Geobacter metallireducens (strain ATCC 53774 / DSM 7210 / GS-15).